Here is a 193-residue protein sequence, read N- to C-terminus: Imidazoleglycerol-phosphate dehydratase (193 aa).

It belongs to the imidazoleglycerol-phosphate dehydratase family.

It localises to the cytoplasm. It carries out the reaction D-erythro-1-(imidazol-4-yl)glycerol 3-phosphate = 3-(imidazol-4-yl)-2-oxopropyl phosphate + H2O. The protein operates within amino-acid biosynthesis; L-histidine biosynthesis; L-histidine from 5-phospho-alpha-D-ribose 1-diphosphate: step 6/9. The polypeptide is Imidazoleglycerol-phosphate dehydratase (Methanospirillum hungatei JF-1 (strain ATCC 27890 / DSM 864 / NBRC 100397 / JF-1)).